Consider the following 195-residue polypeptide: Imidazoleglycerol-phosphate dehydratase (195 aa).

It belongs to the imidazoleglycerol-phosphate dehydratase family.

Its subcellular location is the cytoplasm. It carries out the reaction D-erythro-1-(imidazol-4-yl)glycerol 3-phosphate = 3-(imidazol-4-yl)-2-oxopropyl phosphate + H2O. It functions in the pathway amino-acid biosynthesis; L-histidine biosynthesis; L-histidine from 5-phospho-alpha-D-ribose 1-diphosphate: step 6/9. The protein is Imidazoleglycerol-phosphate dehydratase of Bordetella petrii (strain ATCC BAA-461 / DSM 12804 / CCUG 43448).